Here is a 640-residue protein sequence, read N- to C-terminus: Probable Ufm1-specific protease (640 aa).

Residues Cys467, Asp591, and His593 contribute to the active site.

The protein belongs to the peptidase C78 family.

Functionally, thiol protease which recognizes and hydrolyzes the peptide bond at the C-terminal Gly of ufm-1, a ubiquitin-like modifier protein bound to a number of target proteins. The protein is Probable Ufm1-specific protease of Oryza sativa subsp. japonica (Rice).